The sequence spans 296 residues: Sulfotransferase 6B1 (296 aa).

The active-site Proton acceptor is the His112. 3'-phosphoadenylyl sulfate is bound by residues Arg134, Ser142, Tyr197, and 253 to 255 (RKG).

The protein belongs to the sulfotransferase 1 family.

The protein localises to the cytoplasm. Its subcellular location is the cytosol. It catalyses the reaction thyroxine + 3'-phosphoadenylyl sulfate = thyroxine sulfate + adenosine 3',5'-bisphosphate + H(+). With respect to regulation, strongly inhibited by the divalent metal cations Fe(2+), Hg(2+), Co(2+), Zn(2+), Cu(2+) and Cd(2+). Its function is as follows. Sulfotransferase that utilizes 3'-phospho-5'-adenylyl sulfate (PAPS) as sulfonate donor to catalyze the sulfate conjugation of a variety of xenobiotic and endogenous compounds, including dopamine, T3 (triiodo-L-thyronine), T4 (thyroxine), flavonoids, isoflavonoids, and other phenolic compounds. This Danio rerio (Zebrafish) protein is Sulfotransferase 6B1.